The sequence spans 347 residues: Putative ORC1-type DNA replication protein 1 (347 aa).

ATP-binding positions include 34 to 38, Y167, and R179; that span reads TGKTV.

The protein belongs to the CDC6/cdc18 family.

Involved in regulation of DNA replication. Has no effect on MCM helicase activity, either stimulatory or inhibitory. Does not bind DNA. The polypeptide is Putative ORC1-type DNA replication protein 1 (cdc6-1) (Thermoplasma acidophilum (strain ATCC 25905 / DSM 1728 / JCM 9062 / NBRC 15155 / AMRC-C165)).